A 528-amino-acid polypeptide reads, in one-letter code: GMP synthase [glutamine-hydrolyzing] (528 aa).

The region spanning 13 to 204 (SILILDFGSQ…VYSISKCKAD (192 aa)) is the Glutamine amidotransferase type-1 domain. The active-site Nucleophile is the C90. Catalysis depends on residues H178 and E180. Positions 205-403 (WNTETFLEET…LGLPDEIIKR (199 aa)) constitute a GMPS ATP-PPase domain. ATP is bound at residue 232–238 (SGGVDSS).

Homodimer.

It carries out the reaction XMP + L-glutamine + ATP + H2O = GMP + L-glutamate + AMP + diphosphate + 2 H(+). It participates in purine metabolism; GMP biosynthesis; GMP from XMP (L-Gln route): step 1/1. In terms of biological role, catalyzes the synthesis of GMP from XMP. The sequence is that of GMP synthase [glutamine-hydrolyzing] from Prochlorococcus marinus (strain MIT 9515).